The chain runs to 460 residues: Cysteine--tRNA ligase (460 aa).

Cys-28 is a binding site for Zn(2+). Residues 30-40 carry the 'HIGH' region motif; that stretch reads VTIYDLCHIGH. Zn(2+) is bound by residues Cys-209, His-234, and Glu-238. The 'KMSKS' region motif lies at 266 to 270; it reads KMSKS. Lys-269 serves as a coordination point for ATP.

The protein belongs to the class-I aminoacyl-tRNA synthetase family. As to quaternary structure, monomer. The cofactor is Zn(2+).

The protein resides in the cytoplasm. It catalyses the reaction tRNA(Cys) + L-cysteine + ATP = L-cysteinyl-tRNA(Cys) + AMP + diphosphate. The chain is Cysteine--tRNA ligase from Vibrio parahaemolyticus serotype O3:K6 (strain RIMD 2210633).